An 83-amino-acid chain; its full sequence is Alpha-toxin CvIV4 (83 aa).

A signal peptide spans 1–19 (MNYFILILVAALLILDVNC). The LCN-type CS-alpha/beta domain maps to 21-79 (KDGYPVEHSGCKYTCWKNEYCDKVCKDLKGEGGYCYINLTCWCTGLPDNVPLKTNQRCN). Intrachain disulfides connect Cys-31/Cys-78, Cys-35/Cys-55, Cys-41/Cys-61, and Cys-45/Cys-63.

Belongs to the long (4 C-C) scorpion toxin superfamily. Sodium channel inhibitor family. In terms of tissue distribution, expressed by the venom gland.

The protein localises to the secreted. This toxin significantly slows the fast inactivation of Nav1.2/SCN2A (EC(50)=580 nM), Nav1.3/SCN3A (EC(50)=1310 nM), Nav1.4/SCN4A (EC(50)=530 nM), and Nav1.7/SCN9A (EC(50)=1340 nM). The toxin does not affect the peak amplitude of Nav1.7 currents. On all channels cited above, the toxin requires depolarizing potentials to slow channel inactivation. In addition, the toxin has no or very weak effects on the voltage-dependence of steady-state inactivation, and on voltage-dependence of activation. In vivo, it produces paw licking in mice equivalent to the effects of whole venom. The chain is Alpha-toxin CvIV4 from Centruroides vittatus (Striped bark scorpion).